Consider the following 469-residue polypeptide: 3-isopropylmalate dehydratase large subunit 1 (469 aa).

Residues Cys344, Cys404, and Cys407 each coordinate [4Fe-4S] cluster.

Belongs to the aconitase/IPM isomerase family. LeuC type 1 subfamily. Heterodimer of LeuC and LeuD. [4Fe-4S] cluster is required as a cofactor.

It carries out the reaction (2R,3S)-3-isopropylmalate = (2S)-2-isopropylmalate. Its pathway is amino-acid biosynthesis; L-leucine biosynthesis; L-leucine from 3-methyl-2-oxobutanoate: step 2/4. Its function is as follows. Catalyzes the isomerization between 2-isopropylmalate and 3-isopropylmalate, via the formation of 2-isopropylmaleate. The protein is 3-isopropylmalate dehydratase large subunit 1 of Rubrobacter xylanophilus (strain DSM 9941 / JCM 11954 / NBRC 16129 / PRD-1).